The following is a 767-amino-acid chain: Protein SQS1 (767 aa).

Residues methionine 1–serine 34 are compositionally biased toward basic residues. 5 disordered regions span residues methionine 1–alanine 71, serine 101–valine 127, arginine 147–lysine 258, lysine 363–phenylalanine 387, and glutamate 466–aspartate 494. The span at arginine 35–glycine 45 shows a compositional bias: gly residues. Over residues glutamate 173–asparagine 239 the composition is skewed to acidic residues. The segment covering threonine 245–aspartate 254 has biased composition (polar residues). Positions threonine 481–glycine 493 are enriched in acidic residues. An R3H domain is found at glycine 589–lysine 652. One can recognise a G-patch domain in the interval arginine 716–lysine 763.

It belongs to the SQS1 family.

The protein resides in the cytoplasm. It localises to the nucleus. May be involved in splicing. This is Protein SQS1 (SQS1) from Vanderwaltozyma polyspora (strain ATCC 22028 / DSM 70294 / BCRC 21397 / CBS 2163 / NBRC 10782 / NRRL Y-8283 / UCD 57-17) (Kluyveromyces polysporus).